A 666-amino-acid polypeptide reads, in one-letter code: uncharacterized protein (666 aa).

This sequence belongs to the MG032/MG096/MG288 family.

This is an uncharacterized protein from Mycoplasma genitalium (strain ATCC 33530 / DSM 19775 / NCTC 10195 / G37) (Mycoplasmoides genitalium).